The primary structure comprises 360 residues: Terpene synthase 5 (360 aa).

The DDxx(x)D/E motif motif lies at 87-92 (DDFLER). An NDxxSxxxD/E motif motif is present at residues 237-245 (NDCVSYAKE).

The protein belongs to the terpene synthase family.

In terms of biological role, terpene synthase that converts its substrate farnesyl diphosphate (FPP) into 2 yet unidentified sesquiterpenes. This Dictyostelium purpureum (Slime mold) protein is Terpene synthase 5.